Consider the following 358-residue polypeptide: tRNA-specific 2-thiouridylase MnmA (358 aa).

ATP-binding positions include 8–15 and Met-35; that span reads AMSGGVDS. An interaction with target base in tRNA region spans residues 95 to 97; it reads NPD. The Nucleophile role is filled by Cys-100. Cys-100 and Cys-194 are oxidised to a cystine. Gly-124 serves as a coordination point for ATP. Residues 144-146 form an interaction with tRNA region; sequence KDQ. The active-site Cysteine persulfide intermediate is Cys-194. Residues 301–302 are interaction with tRNA; that stretch reads RY.

It belongs to the MnmA/TRMU family.

It localises to the cytoplasm. The catalysed reaction is S-sulfanyl-L-cysteinyl-[protein] + uridine(34) in tRNA + AH2 + ATP = 2-thiouridine(34) in tRNA + L-cysteinyl-[protein] + A + AMP + diphosphate + H(+). In terms of biological role, catalyzes the 2-thiolation of uridine at the wobble position (U34) of tRNA, leading to the formation of s(2)U34. This chain is tRNA-specific 2-thiouridylase MnmA, found in Chlamydia trachomatis serovar L2 (strain ATCC VR-902B / DSM 19102 / 434/Bu).